A 146-amino-acid chain; its full sequence is Leghemoglobin-3 (146 aa).

In terms of domain architecture, Globin spans 2-146 (GFTDKQEALV…LATAIKKAMV (145 aa)). Tyrosine 29 carries the post-translational modification Nitrated tyrosine. Serine 44 provides a ligand contact to heme b. A Phosphoserine modification is found at serine 44. Histidine 61 serves as a coordination point for O2. Residues lysine 64, histidine 93, and lysine 96 each coordinate heme b. Position 134 is a nitrated tyrosine (tyrosine 134).

This sequence belongs to the plant globin family. As to quaternary structure, monomer. Post-translationally, nitrated in effective nodules and particularly in hypoxic conditions; this mechanism may play a protective role in the symbiosis by buffering toxic peroxynitrite NO(2)(-). Nitration level decrease during nodule senescence. In terms of processing, phosphorylation at Ser-44 disrupts the molecular environment of its porphyrin ring oxygen binding pocket, thus leading to a reduced oxygen consumption and to the delivery of oxygen O(2) to symbiosomes. As to expression, root nodules.

The protein resides in the cytoplasm. Its subcellular location is the cytosol. It localises to the nucleus. Its function is as follows. Leghemoglobin that reversibly binds oxygen O(2) through a pentacoordinated heme iron. In root nodules, facilitates the diffusion of oxygen to the bacteroids while preventing the bacterial nitrogenase from being inactivated by buffering dioxygen, nitric oxide and carbon monoxide, and promoting the formation of reactive oxygen species (ROS, e.g. H(2)O(2)). This role is essential for symbiotic nitrogen fixation (SNF). This is Leghemoglobin-3 from Medicago sativa (Alfalfa).